A 145-amino-acid chain; its full sequence is Bacilliredoxin MW1318 (145 aa).

It belongs to the bacilliredoxin family.

This is Bacilliredoxin MW1318 from Staphylococcus aureus (strain MW2).